We begin with the raw amino-acid sequence, 371 residues long: Putative phosphoserine aminotransferase (371 aa).

Arg45 is an L-glutamate binding site. Pyridoxal 5'-phosphate is bound by residues Phe103, Thr149, Asp171, and Gln194. Lys195 is subject to N6-(pyridoxal phosphate)lysine. Asn246–Thr247 serves as a coordination point for pyridoxal 5'-phosphate.

Belongs to the class-V pyridoxal-phosphate-dependent aminotransferase family. SerC subfamily. Homodimer. The cofactor is pyridoxal 5'-phosphate.

The protein resides in the cytoplasm. It catalyses the reaction O-phospho-L-serine + 2-oxoglutarate = 3-phosphooxypyruvate + L-glutamate. The enzyme catalyses 4-(phosphooxy)-L-threonine + 2-oxoglutarate = (R)-3-hydroxy-2-oxo-4-phosphooxybutanoate + L-glutamate. Its pathway is amino-acid biosynthesis; L-serine biosynthesis; L-serine from 3-phospho-D-glycerate: step 2/3. It participates in cofactor biosynthesis; pyridoxine 5'-phosphate biosynthesis; pyridoxine 5'-phosphate from D-erythrose 4-phosphate: step 3/5. In terms of biological role, catalyzes the reversible conversion of 3-phosphohydroxypyruvate to phosphoserine and of 3-hydroxy-2-oxo-4-phosphonooxybutanoate to phosphohydroxythreonine. In Mycolicibacterium vanbaalenii (strain DSM 7251 / JCM 13017 / BCRC 16820 / KCTC 9966 / NRRL B-24157 / PYR-1) (Mycobacterium vanbaalenii), this protein is Putative phosphoserine aminotransferase.